The primary structure comprises 214 residues: Probable GTP-binding protein EngB (214 aa).

An EngB-type G domain is found at 30–204 (EGFEVAFAGR…YTVLAGWMEL (175 aa)). GTP-binding positions include 38-45 (GRSNAGKS), 64-68 (GRTQL), 82-85 (DLPG), 149-152 (TKAD), and 182-185 (LFSA). The Mg(2+) site is built by S45 and T66.

Belongs to the TRAFAC class TrmE-Era-EngA-EngB-Septin-like GTPase superfamily. EngB GTPase family. The cofactor is Mg(2+).

Necessary for normal cell division and for the maintenance of normal septation. The polypeptide is Probable GTP-binding protein EngB (Pseudomonas fluorescens (strain Pf0-1)).